Reading from the N-terminus, the 129-residue chain is Large ribosomal subunit protein bL12 (129 aa).

This sequence belongs to the bacterial ribosomal protein bL12 family. As to quaternary structure, homodimer. Part of the ribosomal stalk of the 50S ribosomal subunit. Forms a multimeric L10(L12)X complex, where L10 forms an elongated spine to which 2 to 4 L12 dimers bind in a sequential fashion. Binds GTP-bound translation factors.

Functionally, forms part of the ribosomal stalk which helps the ribosome interact with GTP-bound translation factors. Is thus essential for accurate translation. The sequence is that of Large ribosomal subunit protein bL12 from Treponema denticola (strain ATCC 35405 / DSM 14222 / CIP 103919 / JCM 8153 / KCTC 15104).